The chain runs to 157 residues: MAEEQAAAQEQQPAFGIEKVYVKDLSLEIPHAPQIFIQREAPQVSIELSNATAQLEEGIYEVVVTVTVTSKIADKTVFLVEVAQAGIFQIRNVPQENIDIILGVTCPNIIFPYARETISDVVTRAGFPPVLLNPVNFEALYAQQKQEQAKANGATTH.

The protein belongs to the SecB family. In terms of assembly, homotetramer, a dimer of dimers. One homotetramer interacts with 1 SecA dimer.

It is found in the cytoplasm. Functionally, one of the proteins required for the normal export of preproteins out of the cell cytoplasm. It is a molecular chaperone that binds to a subset of precursor proteins, maintaining them in a translocation-competent state. It also specifically binds to its receptor SecA. This chain is Protein-export protein SecB, found in Methylobacillus flagellatus (strain ATCC 51484 / DSM 6875 / VKM B-1610 / KT).